We begin with the raw amino-acid sequence, 386 residues long: 1-deoxy-D-xylulose 5-phosphate reductoisomerase (386 aa).

NADPH contacts are provided by T7, G8, S9, I10, A33, and N124. 1-deoxy-D-xylulose 5-phosphate is bound at residue K125. E126 provides a ligand contact to NADPH. D148 is a binding site for Mn(2+). S149, E150, S174, and H197 together coordinate 1-deoxy-D-xylulose 5-phosphate. Residue E150 participates in Mn(2+) binding. G203 provides a ligand contact to NADPH. 4 residues coordinate 1-deoxy-D-xylulose 5-phosphate: S210, N215, K216, and E219. E219 is a Mn(2+) binding site.

This sequence belongs to the DXR family. Mg(2+) serves as cofactor. Requires Mn(2+) as cofactor.

It carries out the reaction 2-C-methyl-D-erythritol 4-phosphate + NADP(+) = 1-deoxy-D-xylulose 5-phosphate + NADPH + H(+). Its pathway is isoprenoid biosynthesis; isopentenyl diphosphate biosynthesis via DXP pathway; isopentenyl diphosphate from 1-deoxy-D-xylulose 5-phosphate: step 1/6. Catalyzes the NADPH-dependent rearrangement and reduction of 1-deoxy-D-xylulose-5-phosphate (DXP) to 2-C-methyl-D-erythritol 4-phosphate (MEP). This is 1-deoxy-D-xylulose 5-phosphate reductoisomerase from Kitasatospora griseola (Streptomyces griseolosporeus).